Here is a 182-residue protein sequence, read N- to C-terminus: Vacuolar protein sorting-associated protein 29 (182 aa).

N6-acetyllysine is present on lysine 50.

The protein belongs to the VPS29 family. In terms of assembly, component of the commander complex consisting of the CCC subcomplex and the retriever subcomplex. Component of the heterotrimeric retriever complex formed by VPS26C, VPS29 and VPS35L; within the complex interacts with VPS35L. Component of the heterotrimeric retromer cargo-selective complex (CSC), also described as vacuolar protein sorting subcomplex (VPS), formed by VPS26 (VPS26A or VPS26B), VPS29 and VPS35. The CSC has a highly elongated structure with VPS26 and VPS29 binding independently at opposite distal ends of VPS35 as central platform. The CSC is believed to associate with variable sorting nexins to form functionally distinct retromer complex variants. The originally described retromer complex (also called SNX-BAR retromer) is a pentamer containing the CSC and a heterodimeric membrane-deforming subcomplex formed between SNX1 or SNX2 and SNX5 or SNX6 (also called SNX-BAR subcomplex); the respective CSC and SNX-BAR subcomplexes associate with low affinity. The CSC associates with SNX3 to form a SNX3-retromer complex. The CSC associates with SNX27, the WASH complex and the SNX-BAR subcomplex to form the SNX27-retromer complex. Interacts with VPS26A, VPS35, SNX1, SNX2, SNX3, SNX27, WASHC5. Interacts with TBC1D5; this interaction is blocked by VPS35L in the retriever complex. Interacts with SNX17; the interaction is indirect; SNX17 (via its C-terminus) interacts with the retriever complex (via VPS26C and VPS35L). Interacts with VPS26B and ANKRD27.

The protein localises to the cytoplasm. The protein resides in the membrane. It localises to the endosome membrane. Its subcellular location is the early endosome. It is found in the late endosome. In terms of biological role, component of the commander complex that is essential for endosomal recycling of transmembrane cargos; the commander complex is composed of the CCC subcomplex and the retriever subcomplex. Component of the retriever complex, which is a heterotrimeric complex related to retromer cargo-selective complex (CSC) and essential for retromer-independent retrieval and recycling of numerous cargos such as integrin alpha-5/beta-1 (ITGA5:ITGB1). Component of the retromer cargo-selective complex (CSC). The CSC is believed to be the core functional component of retromer or respective retromer complex variants acting to prevent missorting of selected transmembrane cargo proteins into the lysosomal degradation pathway. The recruitment of the CSC to the endosomal membrane involves RAB7A and SNX3. The SNX-BAR retromer mediates retrograde transport of cargo proteins from endosomes to the trans-Golgi network (TGN) and is involved in endosome-to-plasma membrane transport for cargo protein recycling. The SNX3-retromer mediates the retrograde endosome-to-TGN transport of WLS distinct from the SNX-BAR retromer pathway. The SNX27-retromer is believed to be involved in endosome-to-plasma membrane trafficking and recycling of a broad spectrum of cargo proteins. The CSC seems to act as recruitment hub for other proteins, such as the WASH complex and TBC1D5. Required to regulate transcytosis of the polymeric immunoglobulin receptor (pIgR-pIgA). In the endosomes, retriever complex drives the retrieval and recycling of NxxY-motif-containing cargo proteins by coupling to SNX17, a cargo essential for the homeostatic maintenance of numerous cell surface proteins associated with processes that include cell migration, cell adhesion, nutrient supply and cell signaling. The recruitment of the retriever complex to the endosomal membrane involves CCC and WASH complexes. Involved in GLUT1 endosome-to-plasma membrane trafficking; the function is dependent of association with ANKRD27. The sequence is that of Vacuolar protein sorting-associated protein 29 from Rattus norvegicus (Rat).